Here is a 747-residue protein sequence, read N- to C-terminus: Polyribonucleotide nucleotidyltransferase (747 aa).

2 residues coordinate Mg(2+): D502 and D508. The 60-residue stretch at 569-628 folds into the KH domain; it reads PRMLTITIDPDKIRDIIGPGGKIIKKIIEETGVEIDVEDDGRVFIASTDAAAGERALKII. One can recognise an S1 motif domain in the interval 638–712; it reads GKVYNGKVTR…PQGRLKLSRK (75 aa). The segment at 718–747 is disordered; sequence STVGEGGHRHFRRAGREGGHRGLNNRRQSR.

Belongs to the polyribonucleotide nucleotidyltransferase family. Mg(2+) is required as a cofactor.

Its subcellular location is the cytoplasm. The enzyme catalyses RNA(n+1) + phosphate = RNA(n) + a ribonucleoside 5'-diphosphate. Functionally, involved in mRNA degradation. Catalyzes the phosphorolysis of single-stranded polyribonucleotides processively in the 3'- to 5'-direction. The polypeptide is Polyribonucleotide nucleotidyltransferase (Moorella thermoacetica (strain ATCC 39073 / JCM 9320)).